Consider the following 436-residue polypeptide: Bystin (436 aa).

Residues 1-105 (MPKLKVTRGA…GSDEEDEEWP (105 aa)) are disordered. Serine 54 bears the Phosphoserine mark. The span at 70-86 (TEHATGDRPAKPRERAT) shows a compositional bias: basic and acidic residues. Positions 96 to 105 (GSDEEDEEWP) are enriched in acidic residues. A Phosphoserine modification is found at serine 97. At threonine 155 the chain carries Phosphothreonine. Residues serine 166 and serine 413 each carry the phosphoserine modification.

This sequence belongs to the bystin family. As to quaternary structure, binds trophinin, tastin and cytokeratins.

Its subcellular location is the cytoplasm. The protein resides in the nucleus. It is found in the nucleolus. Functionally, required for processing of 20S pre-rRNA precursor and biogenesis of 40S ribosomal subunits. The chain is Bystin from Rattus norvegicus (Rat).